Here is a 231-residue protein sequence, read N- to C-terminus: MKAITLLSSGLDSVAALAIAAEDFDIEMAITFDYGQRAREREIEYSRKVCEYFGIEHRVIKLDWLSEITSTSLVNRDVEVPSLSFEDIGEAAPAEITDASAKAVWVPNRNGVMLNIAGSFAESRECEYLVVGFNGEEAGTFPDNSLDYVKAMDRAFFYSTQNGVKILAPLIELGKTEIVRRALEAKAPLEYSWSCYRGEEIPCGECESCVRRARAFKNAGVKDPLLERLGI.

Position 7-17 (7-17 (LSSGLDSVAAL)) interacts with ATP. Zn(2+) contacts are provided by Cys195, Cys203, Cys206, and Cys209.

Belongs to the QueC family. It depends on Zn(2+) as a cofactor.

The enzyme catalyses 7-carboxy-7-deazaguanine + NH4(+) + ATP = 7-cyano-7-deazaguanine + ADP + phosphate + H2O + H(+). It participates in purine metabolism; 7-cyano-7-deazaguanine biosynthesis. In terms of biological role, catalyzes the ATP-dependent conversion of 7-carboxy-7-deazaguanine (CDG) to 7-cyano-7-deazaguanine (preQ(0)). In Methanosarcina barkeri (strain Fusaro / DSM 804), this protein is 7-cyano-7-deazaguanine synthase.